A 717-amino-acid chain; its full sequence is Mitotic spindle assembly checkpoint protein MAD1 (717 aa).

Met-1 carries the N-acetylmethionine modification. Ser-16 is modified (phosphoserine). Positions 46–631 form a coiled coil; the sequence is EQSMQLEERA…QTKIQEFRKV (586 aa). Lys-61 bears the N6-acetyllysine; alternate mark. Lys-61 participates in a covalent cross-link: Glycyl lysine isopeptide (Lys-Gly) (interchain with G-Cter in SUMO2); alternate. The Nuclear localization signal motif lies at 79-82; the sequence is KRAR. Residues Ser-214 and Ser-428 each carry the phosphoserine modification. The necessary for interaction with NEK2 stretch occupies residues 380-532; that stretch reads LLEERKKREI…EMQMERLTLQ (153 aa). The interval 540 to 551 is necessary for interaction with MAD2L1; that stretch reads TKVLHMSLNPAS.

Belongs to the MAD1 family. As to quaternary structure, homodimer. Dimerizes via its N- and C- terminal regions. Heterodimerizes with MAD2L1 in order to form a tetrameric MAD1L1-MAD2L1 core complex. Interacts with the closed conformation form of MAD2L1 (C-MAD2) and open conformation form of MAD2L1 (O-MAD2). It is unclear whether MAD1L1 dimerization promotes the conversion of closed to open conformation of MAD2L1. Formation of a heterotetrameric core complex containing two molecules each of MAD1L1 and of MAD2L1 promotes binding of another molecule of MAD2L1 to each MAD2L1, resulting in a heterohexamer. Perturbation of the original MAD1L1-MAD2L1 structure by the spindle checkpoint may decrease MAD2L1 affinity for MAD1L1. CDC20 can compete with MAD1L1 for MAD2L1 binding, until the attachment and/or tension dampen the checkpoint signal, preventing further release of MAD2L1 on to CDC20. Also able to interact with the BUB1/BUB3 complex. Interacts with NEK2. Interacts with TTK. Interacts with TPR; the interactions occurs in a microtubule-independent manner. Interacts with IK. Interacts with the viral Tax protein. Interacts with PRAP1. In terms of processing, phosphorylated; by BUB1. Become hyperphosphorylated in late S through M phases or after mitotic spindle damage.

The protein localises to the nucleus. It is found in the chromosome. Its subcellular location is the centromere. The protein resides in the kinetochore. It localises to the nucleus envelope. The protein localises to the cytoplasm. It is found in the cytoskeleton. Its subcellular location is the microtubule organizing center. The protein resides in the centrosome. It localises to the spindle. The protein localises to the spindle pole. Functionally, component of the spindle-assembly checkpoint that prevents the onset of anaphase until all chromosomes are properly aligned at the metaphase plate. Forms a heterotetrameric complex with the closed conformation form of MAD2L1 (C-MAD2) at unattached kinetochores during prometaphase, recruits an open conformation of MAD2L1 (O-MAD2) and promotes the conversion of O-MAD2 to C-MAD2, which ensures mitotic checkpoint signaling. In Cricetulus griseus (Chinese hamster), this protein is Mitotic spindle assembly checkpoint protein MAD1 (MAD1L1).